The primary structure comprises 129 residues: UPF0102 protein Clim_0016 (129 aa).

It belongs to the UPF0102 family.

The sequence is that of UPF0102 protein Clim_0016 from Chlorobium limicola (strain DSM 245 / NBRC 103803 / 6330).